A 125-amino-acid chain; its full sequence is Morphine 6-dehydrogenase (125 aa).

NADP(+) contacts are provided by residues 9-18 and 74-111; these read GHSIPVLGFI and SALG…IERE.

Belongs to the aldo/keto reductase family. In terms of assembly, monomer. In terms of processing, the N-terminus is blocked.

It is found in the cytoplasm. It catalyses the reaction morphine + NAD(+) = morphinone + NADH + H(+). The enzyme catalyses morphine + NADP(+) = morphinone + NADPH + H(+). Strongly inhibited by sulfhydryl reagents and quercetin, but not by pyrazole, barbital and indomethacine. In terms of biological role, catalyzes the dehydrogenation of morphine to morphinone. Uses both NAD and NADP, but the activity is much greater with NAD than with NADP. This Oryctolagus cuniculus (Rabbit) protein is Morphine 6-dehydrogenase.